Consider the following 129-residue polypeptide: Follitropin subunit beta (129 aa).

Residues Met-1–Ser-20 form the signal peptide. Intrachain disulfides connect Cys-21–Cys-69, Cys-35–Cys-84, Cys-38–Cys-122, Cys-46–Cys-100, Cys-50–Cys-102, and Cys-105–Cys-112. Residues Asn-25 and Asn-42 are each glycosylated (N-linked (GlcNAc...) asparagine).

The protein belongs to the glycoprotein hormones subunit beta family. Heterodimer. The active follitropin is a heterodimer composed of an alpha chain/CGA shared with other hormones and a unique beta chain/FSHB shown here.

The protein resides in the secreted. Functionally, together with the alpha chain CGA constitutes follitropin, the follicle-stimulating hormone, and provides its biological specificity to the hormone heterodimer. Binds FSHR, a G protein-coupled receptor, on target cells to activate downstream signaling pathways. Follitropin is involved in follicle development and spermatogenesis in reproductive organs. This is Follitropin subunit beta (FSHB) from Sus scrofa (Pig).